A 142-amino-acid polypeptide reads, in one-letter code: Biogenesis of lysosome-related organelles complex 1 subunit 2 (142 aa).

Positions 1-33 are disordered; sequence MAAAAEGVLATRSDEPARDDAAVETAEEAKEPA. At A2 the chain carries N-acetylalanine. A compositionally biased stretch (basic and acidic residues) spans 12–33; the sequence is RSDEPARDDAAVETAEEAKEPA. Positions 79-127 form a coiled coil; sequence EMKDIAINISRNLKDLNQKYAGLQPYLDQINVIEEQVAALEQAAYKLDA.

Belongs to the BLOC1S2 family. Component of the biogenesis of lysosome-related organelles complex 1 (BLOC-1) composed of BLOC1S1, BLOC1S2, BLOC1S3, BLOC1S4, BLOC1S5, BLOC1S6, DTNBP1/BLOC1S7 and SNAPIN/BLOC1S8. Octamer composed of one copy each BLOC1S1, BLOC1S2, BLOC1S3, BLOC1S4, BLOC1S5, BLOC1S6, DTNBP1/BLOC1S7 and SNAPIN/BLOC1S8. Interacts directly with BLOC1S1, BLOC1S3, BLOC1S4, BLOC1S5 and SNAPIN. The BLOC-1 complex associates with the AP-3 protein complex and membrane protein cargos. Component of the BLOC-one-related complex (BORC) which is composed of BLOC1S1, BLOC1S2, BORCS5, BORCS6, BORCS7, BORCS8, KXD1 and SNAPIN. Interacts with gamma-tubulin. Interacts with IFT57. In terms of tissue distribution, isoform 1 and isoform 2 are widely expressed. Expressed in various malignant tumor tissues (at protein level).

The protein resides in the cytoplasm. It is found in the cytoskeleton. Its subcellular location is the microtubule organizing center. The protein localises to the centrosome. It localises to the lysosome membrane. Component of the BLOC-1 complex, a complex that is required for normal biogenesis of lysosome-related organelles (LRO), such as platelet dense granules and melanosomes. In concert with the AP-3 complex, the BLOC-1 complex is required to target membrane protein cargos into vesicles assembled at cell bodies for delivery into neurites and nerve terminals. The BLOC-1 complex, in association with SNARE proteins, is also proposed to be involved in neurite extension. As part of the BORC complex may play a role in lysosomes movement and localization at the cell periphery. Associated with the cytosolic face of lysosomes, the BORC complex may recruit ARL8B and couple lysosomes to microtubule plus-end-directed kinesin motor. May play a role in cell proliferation. The chain is Biogenesis of lysosome-related organelles complex 1 subunit 2 (BLOC1S2) from Homo sapiens (Human).